The following is a 319-amino-acid chain: Ribosomal RNA small subunit methyltransferase H (319 aa).

Residues Gly-37–Tyr-39, Asp-57, Phe-96, Asp-105, and Gln-112 each bind S-adenosyl-L-methionine. Residues Arg-292 to Pro-302 show a composition bias toward basic and acidic residues. Residues Arg-292–Ala-319 are disordered.

This sequence belongs to the methyltransferase superfamily. RsmH family.

It is found in the cytoplasm. The catalysed reaction is cytidine(1402) in 16S rRNA + S-adenosyl-L-methionine = N(4)-methylcytidine(1402) in 16S rRNA + S-adenosyl-L-homocysteine + H(+). Specifically methylates the N4 position of cytidine in position 1402 (C1402) of 16S rRNA. This chain is Ribosomal RNA small subunit methyltransferase H, found in Syntrophobacter fumaroxidans (strain DSM 10017 / MPOB).